An 81-amino-acid chain; its full sequence is Acyl carrier protein (81 aa).

Residues S4–V79 enclose the Carrier domain. At S39 the chain carries O-(pantetheine 4'-phosphoryl)serine.

Belongs to the acyl carrier protein (ACP) family. Post-translationally, 4'-phosphopantetheine is transferred from CoA to a specific serine of apo-ACP by AcpS. This modification is essential for activity because fatty acids are bound in thioester linkage to the sulfhydryl of the prosthetic group.

It is found in the cytoplasm. It functions in the pathway lipid metabolism; fatty acid biosynthesis. Functionally, carrier of the growing fatty acid chain in fatty acid biosynthesis. The sequence is that of Acyl carrier protein from Thermosynechococcus vestitus (strain NIES-2133 / IAM M-273 / BP-1).